Consider the following 1007-residue polypeptide: Sal-like protein 2 (1007 aa).

Residues 1-33 (MSRRKQRKPQQLISDCEGPSASENGDASEEDHP) are disordered. The C2H2-type 1; atypical zinc-finger motif lies at 34 to 56 (QVCAKCCAQFTDPTEFLAHQNAC). Disordered stretches follow at residues 59–121 (DPPV…GEES), 137–177 (GGGL…SGHL), 220–243 (PASPSELPGTGTASSTKPLLPLFS), and 286–306 (PFSAGGVGRSHKPTPAPSPAL). A compositionally biased stretch (low complexity) spans 70 to 80 (ENPNNSSASSE). Positions 99-108 (PPDSGSSVPT) are enriched in polar residues. Over residues 151 to 171 (PLPPESTPAPPPPPPPPPPPG) the composition is skewed to pro residues. S243 carries the phosphoserine modification. 2 consecutive C2H2-type zinc fingers follow at residues 373–395 (HKCRFCAKVFGSDSALQIHLRSH) and 401–423 (YKCNVCGNRFTTRGNLKVHFHRH). Disordered stretches follow at residues 520–540 (KNKADENTPPGSEGSAISGVA) and 610–629 (AASGAPTTSAPAPSSSASSG). C2H2-type zinc fingers lie at residues 631 to 653 (NQCVICLRVLSCPRALRLHYGQH), 659 to 681 (FKCKVCGRAFSTRGNLRAHFVGH), and 691 to 713 (NSCPICQKKFTNAVTLQQHVRMH). A disordered region spans residues 714-886 (LGGQIPNGGT…SALTPEGEAT (173 aa)). The span at 734–744 (ENGSEQSTVSG) shows a compositional bias: polar residues. Over residues 747-757 (SFPQQQSQQPS) the composition is skewed to low complexity. Residues 758–782 (PEEELSEEEEEEDEEEEEDVTDEDS) are compositionally biased toward acidic residues. A phosphoserine mark is found at S797, S802, and S806. A compositionally biased stretch (acidic residues) spans 803 to 812 (EEASGAEEEV). A compositionally biased stretch (basic and acidic residues) spans 862 to 871 (GKEEGGKPER). A Glycyl lysine isopeptide (Lys-Gly) (interchain with G-Cter in ubiquitin) cross-link involves residue K911. 2 consecutive C2H2-type zinc fingers follow at residues 911–933 (KACEVCGQAFPSQAALEEHQKTH) and 940–963 (FTCVFCRQGFLERATLKKHMLLAH).

This sequence belongs to the sal C2H2-type zinc-finger protein family. As to expression, highest levels in adult brain (in different areas). Lower levels in heart; very low levels in kidney and pancreas. Expressed throughout the retina and lens vesicle as well as the periocular mesenchyme.

It is found in the nucleus. Probable transcription factor that plays a role in eye development before, during, and after optic fissure closure. This is Sal-like protein 2 (SALL2) from Homo sapiens (Human).